Consider the following 502-residue polypeptide: Protein DETOXIFICATION 49 (502 aa).

Transmembrane regions (helical) follow at residues 41-61 (LPLILTGLLLYSRSMISMLFL), 75-95 (LALGFANITGYSLLSGLSIGM), 123-143 (LLCSLPISILWLNIKKILLFF), 153-173 (AEIFILFSLPDLILQSFLHPI), 190-210 (AFFAVLLHIPINYLLVSSLGL), 216-236 (ALGAIWTNVNLLGFLIIYIVF), 267-287 (VSVCLEWWWYEIMILLCGLLL), 293-313 (VASMGILIQTTALIYIFPSSL), 338-358 (RTGLSLSLGLGLLAMFFALMV), 372-392 (IVKLTSMVLPIIGLCELGNCP), 414-434 (LCCFYFVGMPVAVWLSFFSGF), and 439-459 (LWLGLFAAQGSCLISMLVVLA).

The protein belongs to the multi antimicrobial extrusion (MATE) (TC 2.A.66.1) family.

The protein resides in the membrane. The chain is Protein DETOXIFICATION 49 from Arabidopsis thaliana (Mouse-ear cress).